The sequence spans 644 residues: MAGQLRFTSGKDEDHFQHQGAVELLAFNFLLILTILTIWLFKNHRFRFLHETGGAMVYGLIMGLILRYATAPTDIDSGTVYNCGNLFFSPSTLLVNITDQVYEYKYQREINQHNISPHQGNAILEKMTFDPEIFFNVLLPPIIFHAGYSLKKRHFFQNLGSILTYAFLGTAISCVVIGLIMYGFVKAMVHAGQLKSGDFHFTDCLFFGSLMSATDPVTVLAIFHELHVDPDLYTLLFGESVLNDAVAIVLTYSISIYSPKENPNAFDTAAFFQSVGNFLGIFAGSFAMGSAYAVVTALLTKFTKLREFPMLETGLFFLLSWSAFLSAEAAGLTGIVAVLFCGVTQAHYTYNNLSSDSKLRTKQLFEFMNFLAENVIFCYMGLALFTFQNHIFNALFILGAFLAIFVARACNIYPLSFLLNLGRKQKIPWNFQHMMMFSGLRGAIAFALAIRNTESQPKQMMFTTTLLLVFFTVWVFGGGTTPMLTWLQIRVGVDLDESLKEEPSSQQEANKLDKNMTKTESAQLFRMWYGFDHKYLKPILTHSGPPLTTTLPAWCGPVSRLLTSPQAYGEQLKEDDVECIVNQDELAMNYQEQSPSPSSPTTKLALDQKSSGQTPGKENIYEGDLGLGGYDLKLEQTRGQPQMD.

The Lumenal segment spans residues 1 to 20 (MAGQLRFTSGKDEDHFQHQG). The helical transmembrane segment at 21–41 (AVELLAFNFLLILTILTIWLF) threads the bilayer. Over 42 to 45 (KNHR) the chain is Cytoplasmic. The chain crosses the membrane as a helical span at residues 46 to 66 (FRFLHETGGAMVYGLIMGLIL). Over 67–126 (RYATAPTDIDSGTVYNCGNLFFSPSTLLVNITDQVYEYKYQREINQHNISPHQGNAILEK) the chain is Lumenal. The helical transmembrane segment at 127–147 (MTFDPEIFFNVLLPPIIFHAG) threads the bilayer. Topologically, residues 148 to 164 (YSLKKRHFFQNLGSILT) are cytoplasmic. Residues 165-185 (YAFLGTAISCVVIGLIMYGFV) traverse the membrane as a helical segment. Topologically, residues 186–203 (KAMVHAGQLKSGDFHFTD) are lumenal. The helical transmembrane segment at 204–224 (CLFFGSLMSATDPVTVLAIFH) threads the bilayer. Over 225-235 (ELHVDPDLYTL) the chain is Cytoplasmic. Residues 236-256 (LFGESVLNDAVAIVLTYSISI) traverse the membrane as a helical segment. Topologically, residues 257-277 (YSPKENPNAFDTAAFFQSVGN) are lumenal. Residues 278–298 (FLGIFAGSFAMGSAYAVVTAL) form a helical membrane-spanning segment. Topologically, residues 299–309 (LTKFTKLREFP) are cytoplasmic. A helical transmembrane segment spans residues 310–327 (MLETGLFFLLSWSAFLSA). The Lumenal segment spans residues 328-333 (EAAGLT). The helical transmembrane segment at 334–350 (GIVAVLFCGVTQAHYTY) threads the bilayer. Topologically, residues 351–364 (NNLSSDSKLRTKQL) are cytoplasmic. A helical transmembrane segment spans residues 365–385 (FEFMNFLAENVIFCYMGLALF). Thr-386 is a topological domain (lumenal). A helical membrane pass occupies residues 387-407 (FQNHIFNALFILGAFLAIFVA). Residues 408–429 (RACNIYPLSFLLNLGRKQKIPW) are Cytoplasmic-facing. A helical membrane pass occupies residues 430–450 (NFQHMMMFSGLRGAIAFALAI). Residues 451 to 465 (RNTESQPKQMMFTTT) are Lumenal-facing. Residues 466-486 (LLLVFFTVWVFGGGTTPMLTW) traverse the membrane as a helical segment. Over 487–644 (LQIRVGVDLD…EQTRGQPQMD (158 aa)) the chain is Cytoplasmic. Residues 590–644 (YQEQSPSPSSPTTKLALDQKSSGQTPGKENIYEGDLGLGGYDLKLEQTRGQPQMD) are disordered.

It belongs to the monovalent cation:proton antiporter 1 (CPA1) transporter (TC 2.A.36) family. In terms of assembly, homodimer; phosphatidylinositol-4,5-bisphosphate (PIP2) and phosphatidylinositol 3,4,5-trisphosphate (PIP3) could be involved in the dimer stabilization. Interacts (via the C-terminus) with RACK1. Interacts with CHP1. As to expression, expressed in the brain. Highly expressed in immune cells, specifically macrophages.

The protein localises to the late endosome membrane. It localises to the cell membrane. The protein resides in the early endosome membrane. Its subcellular location is the recycling endosome membrane. It is found in the cytoplasmic vesicle. The protein localises to the phagosome membrane. It catalyses the reaction Na(+)(in) + H(+)(out) = Na(+)(out) + H(+)(in). The catalysed reaction is K(+)(in) + H(+)(out) = K(+)(out) + H(+)(in). Functionally, endosomal Na(+), K(+)/H(+) antiporter. Mediates the electroneutral exchange of endosomal luminal H(+) for a cytosolic Na(+) or K(+). By facilitating proton efflux, SLC9A9 counteracts the acidity generated by vacuolar (V)-ATPase, thereby limiting luminal acidification. Regulates organellar pH and consequently, endosome maturation and endocytic trafficking of plasma membrane receptors and neurotransporters. Promotes the recycling of transferrin receptors back to the cell surface to facilitate additional iron uptake in the brain. Regulates synaptic transmission by regulating the luminal pH of axonal endosomes. Regulates phagosome lumenal pH, thus affecting phagosome maturation, and consequently, microbicidal activity in macrophages. Can also be active at the cell surface of specialized cells, e.g., in the inner ear hair bundles uses the high K(+) of the endolymph to regulate intracelular pH. The chain is Sodium/hydrogen exchanger 9 (Slc9a9) from Mus musculus (Mouse).